A 552-amino-acid polypeptide reads, in one-letter code: CTP synthase (552 aa).

Positions 1–270 (MTKFVFVTGG…DGLICDKLRL (270 aa)) are amidoligase domain. Ser13 is a binding site for CTP. UTP is bound at residue Ser13. ATP is bound by residues 14–19 (SLGKGI) and Asp71. Residues Asp71 and Glu144 each contribute to the Mg(2+) site. Residues 151–153 (DIE), 191–196 (KTKPTQ), and Lys227 each bind CTP. UTP-binding positions include 191 to 196 (KTKPTQ) and Lys227. In terms of domain architecture, Glutamine amidotransferase type-1 spans 295–548 (QIAMVGKYVE…IKAAVEHQKP (254 aa)). Residue Gly357 coordinates L-glutamine. Cys384 (nucleophile; for glutamine hydrolysis) is an active-site residue. Residues 385-388 (LGMQ) and Glu408 each bind L-glutamine. The disordered stretch occupies residues 432-451 (KTRSENSDLGGTMRLGAQSS). Arg474 is a binding site for L-glutamine. Catalysis depends on residues His521 and Glu523.

It belongs to the CTP synthase family. Homotetramer.

It carries out the reaction UTP + L-glutamine + ATP + H2O = CTP + L-glutamate + ADP + phosphate + 2 H(+). It catalyses the reaction L-glutamine + H2O = L-glutamate + NH4(+). The catalysed reaction is UTP + NH4(+) + ATP = CTP + ADP + phosphate + 2 H(+). It functions in the pathway pyrimidine metabolism; CTP biosynthesis via de novo pathway; CTP from UDP: step 2/2. Allosterically activated by GTP, when glutamine is the substrate; GTP has no effect on the reaction when ammonia is the substrate. The allosteric effector GTP functions by stabilizing the protein conformation that binds the tetrahedral intermediate(s) formed during glutamine hydrolysis. Inhibited by the product CTP, via allosteric rather than competitive inhibition. Catalyzes the ATP-dependent amination of UTP to CTP with either L-glutamine or ammonia as the source of nitrogen. Regulates intracellular CTP levels through interactions with the four ribonucleotide triphosphates. The chain is CTP synthase from Acidovorax sp. (strain JS42).